The following is a 733-amino-acid chain: Centrosomal protein of 68 kDa (733 aa).

Residues Ser-71–Lys-80 show a composition bias toward basic and acidic residues. Disordered regions lie at residues Ser-71 to Val-92, Gly-150 to Asn-207, and Val-222 to Gly-244. Positions Ser-178–Ser-190 are enriched in low complexity. Over residues Gly-231–Asp-241 the composition is skewed to polar residues. Position 315 is a phosphoserine (Ser-315). The interval Pro-420–Ser-442 is disordered. Ser-453 and Ser-459 each carry phosphoserine. Residues His-497 to Lys-571 are disordered. Over residues Ile-540–Ala-569 the composition is skewed to polar residues.

Interacts with CNTLN; the interaction recruits CEP68 to the centrosome. Interacts with the SCF(FBXW11) complex which contains SKP1, CUL1 and FBXW11; the interaction is probably mediated by FBXW11 and the complex also contains CDK5RAP2 and PCNT. Also interacts with F-box protein BTRC. Interacts with serine/threonine-protein kinase PLK1; the interaction leads to phosphorylation of CEP68 and its subsequent degradation. Interacts with NEK2; the interaction leads to phosphorylation of CEP68. In terms of processing, phosphorylation by PLK1 is required for binding to BTRC in prometaphase. Phosphorylated directly or indirectly by NEK2. NEK2-mediated phosphorylation promotes CEP68 dissociation from the centrosome and its degradation at the onset of mitosis. Ubiquitinated and targeted for proteasomal degradation in early mitosis by the SCF(BTRC) and/or SCF(FBXW11) E3 ubiquitin-protein ligase complexes. Degradation is complete by prometaphase and is required for removal of CDK5RAP2 from the peripheral pericentriolar material and subsequent centriole separation.

The protein resides in the cytoplasm. It localises to the cytoskeleton. Its subcellular location is the microtubule organizing center. The protein localises to the centrosome. Functionally, involved in maintenance of centrosome cohesion, probably as part of a linker structure which prevents centrosome splitting. Required for localization of CDK5RAP2 to the centrosome during interphase. Contributes to CROCC/rootletin filament formation. This is Centrosomal protein of 68 kDa (Cep68) from Mus musculus (Mouse).